We begin with the raw amino-acid sequence, 148 residues long: Deoxyuridine 5'-triphosphate nucleotidohydrolase (148 aa).

Residues 67 to 69 (RSG), N80, 84 to 86 (LID), and M94 each bind substrate.

It belongs to the dUTPase family. Mg(2+) is required as a cofactor.

It carries out the reaction dUTP + H2O = dUMP + diphosphate + H(+). It participates in pyrimidine metabolism; dUMP biosynthesis; dUMP from dCTP (dUTP route): step 2/2. Its function is as follows. This enzyme is involved in nucleotide metabolism: it produces dUMP, the immediate precursor of thymidine nucleotides and it decreases the intracellular concentration of dUTP so that uracil cannot be incorporated into DNA. The chain is Deoxyuridine 5'-triphosphate nucleotidohydrolase from Burkholderia ambifaria (strain MC40-6).